A 66-amino-acid chain; its full sequence is Cold shock protein CspC (66 aa).

The 60-residue stretch at 4 to 63 (GTVKWFNAEKGFGFIERENGDDVFVHFSAIQSDGFKSLDEGQKVSFDVEQGARGAQAANV) folds into the CSD domain.

Its subcellular location is the cytoplasm. In Bacillus subtilis (strain 168), this protein is Cold shock protein CspC (cspC).